A 353-amino-acid polypeptide reads, in one-letter code: UPF0283 membrane protein YcjF (353 aa).

Residues 1-19 are compositionally biased toward basic and acidic residues; it reads MSEPLKPRIDFAEPLKEEP. Residues 1–35 are disordered; the sequence is MSEPLKPRIDFAEPLKEEPTSAFKAQQTFSEAESR. Helical transmembrane passes span 70–90, 100–120, and 213–233; these read MVMG…VQWT, VALG…GSVV, and ESTL…FIAW.

This sequence belongs to the UPF0283 family.

It is found in the cell inner membrane. This is UPF0283 membrane protein YcjF from Salmonella gallinarum (strain 287/91 / NCTC 13346).